Here is a 788-residue protein sequence, read N- to C-terminus: Endonuclease MutS2 (788 aa).

332-339 (GPNTGGKT) contributes to the ATP binding site. Residues 713 to 788 (VDLRGMDAEE…GTGVTVVEIK (76 aa)) enclose the Smr domain.

This sequence belongs to the DNA mismatch repair MutS family. MutS2 subfamily. Homodimer. Binds to stalled ribosomes, contacting rRNA.

Its function is as follows. Endonuclease that is involved in the suppression of homologous recombination and thus may have a key role in the control of bacterial genetic diversity. Functionally, acts as a ribosome collision sensor, splitting the ribosome into its 2 subunits. Detects stalled/collided 70S ribosomes which it binds and splits by an ATP-hydrolysis driven conformational change. Acts upstream of the ribosome quality control system (RQC), a ribosome-associated complex that mediates the extraction of incompletely synthesized nascent chains from stalled ribosomes and their subsequent degradation. Probably generates substrates for RQC. The protein is Endonuclease MutS2 of Clostridium botulinum (strain Loch Maree / Type A3).